The primary structure comprises 275 residues: Large ribosomal subunit protein uL2 (275 aa).

Residues 225-275 (MNPIDHPHGGGEGRTSGGRHPVTPWGKPTKGKKTRSNKKTDRLIMRRRQTQ) are disordered.

Belongs to the universal ribosomal protein uL2 family. Part of the 50S ribosomal subunit. Forms a bridge to the 30S subunit in the 70S ribosome.

Functionally, one of the primary rRNA binding proteins. Required for association of the 30S and 50S subunits to form the 70S ribosome, for tRNA binding and peptide bond formation. It has been suggested to have peptidyltransferase activity; this is somewhat controversial. Makes several contacts with the 16S rRNA in the 70S ribosome. This Paramagnetospirillum magneticum (strain ATCC 700264 / AMB-1) (Magnetospirillum magneticum) protein is Large ribosomal subunit protein uL2.